Here is a 313-residue protein sequence, read N- to C-terminus: Porphobilinogen deaminase (313 aa).

C242 bears the S-(dipyrrolylmethanemethyl)cysteine mark.

This sequence belongs to the HMBS family. In terms of assembly, monomer. Dipyrromethane is required as a cofactor.

The enzyme catalyses 4 porphobilinogen + H2O = hydroxymethylbilane + 4 NH4(+). The protein operates within porphyrin-containing compound metabolism; protoporphyrin-IX biosynthesis; coproporphyrinogen-III from 5-aminolevulinate: step 2/4. In terms of biological role, tetrapolymerization of the monopyrrole PBG into the hydroxymethylbilane pre-uroporphyrinogen in several discrete steps. The protein is Porphobilinogen deaminase of Shigella flexneri.